We begin with the raw amino-acid sequence, 396 residues long: MAAAADTFLFTSESVNEGHPDKLCDQISDAVLDACLAQDAESKVACETCTKTNLVMVFGEITTKANVDYEKIVADTCREIGFVSPDVGLDADNCKVLVYIEQQSPDIAQGVHGHLTKRPEDIGAGDQGHMFGYATDETPELMPLSHVLATKLGARLTEVRKNGTCAWLRPDGKTQVTVEYYNENGAMVPIRVHTVLISTQHDETVTNDEIAADLKEHVIKPVIPEKYLDENTIFHLNPSGRFVIGGPHGDAGLTGRKIIIDTYGGWGAHGGGAFSRKDPTKVDRSGAYIARQAAKSIVASGLARRCIVQISYAIGVPEPLSVFVDTYGTGKIHDREILKIVKENFDFRPGMIAIALDLKKGGNRYLKTAAYGHFGREDPDFTWEAAKTLKWEKPQA.

Position 13 (E13) interacts with Mg(2+). An ATP-binding site is contributed by H19. Residue E47 participates in K(+) binding. L-methionine contacts are provided by E60 and Q103. ATP contacts are provided by residues D171 to K173, S239 to F242, D250, R256 to K257, A273, K277, and K281. D250 contributes to the L-methionine binding site. K281 lines the L-methionine pocket.

Belongs to the AdoMet synthase family. As to quaternary structure, homotetramer. Mn(2+) serves as cofactor. The cofactor is Mg(2+). Requires Co(2+) as cofactor. K(+) is required as a cofactor.

The protein localises to the cytoplasm. The catalysed reaction is L-methionine + ATP + H2O = S-adenosyl-L-methionine + phosphate + diphosphate. It functions in the pathway amino-acid biosynthesis; S-adenosyl-L-methionine biosynthesis; S-adenosyl-L-methionine from L-methionine: step 1/1. Its function is as follows. Catalyzes the formation of S-adenosylmethionine from methionine and ATP. The reaction comprises two steps that are both catalyzed by the same enzyme: formation of S-adenosylmethionine (AdoMet) and triphosphate, and subsequent hydrolysis of the triphosphate. The protein is S-adenosylmethionine synthase 2 (SAM2) of Dianthus caryophyllus (Carnation).